We begin with the raw amino-acid sequence, 255 residues long: Homeobox protein Hox-D4 (255 aa).

The interval 31 to 127 (EQGADYYGGG…PKQPPSGTAL (97 aa)) is disordered. Residues 94–107 (EPCPAPPAPPPAPL) are compositionally biased toward pro residues. An Antp-type hexapeptide motif is present at residues 133–138 (VYPWMK). Positions 154–213 (PKRSRTAYTRQQVLELEKEFHFNRYLTRRRRIEIAHTLCLSERQIKIWFQNRRMKWKKDH) form a DNA-binding region, homeobox. Residues 212 to 255 (DHKLPNTKGRSSSSSSSSSCSSSVAPSQHLQPMAKDHHTDLTTL) are disordered. Residues 222–234 (SSSSSSSSSCSSS) are compositionally biased toward low complexity. Residues 245 to 255 (AKDHHTDLTTL) are compositionally biased toward basic and acidic residues.

It belongs to the Antp homeobox family. Deformed subfamily. In terms of assembly, forms a DNA-binding heterodimer with transcription factor PBX1.

The protein localises to the nucleus. Its function is as follows. Sequence-specific transcription factor which is part of a developmental regulatory system that provides cells with specific positional identities on the anterior-posterior axis. The protein is Homeobox protein Hox-D4 (HOXD4) of Homo sapiens (Human).